Reading from the N-terminus, the 699-residue chain is Polyribonucleotide nucleotidyltransferase (699 aa).

Mg(2+) contacts are provided by aspartate 485 and aspartate 491. In terms of domain architecture, KH spans 552–611 (PRITTIKINPEKIRDVIGKGGAVIRALTEETGTTIELEDDGTVKIASSNGDATREAIRRI). The S1 motif domain occupies 621–689 (GRIYNGKVIR…RQGRVRLSIK (69 aa)).

This sequence belongs to the polyribonucleotide nucleotidyltransferase family. Component of the RNA degradosome, which is a multiprotein complex involved in RNA processing and mRNA degradation. The cofactor is Mg(2+).

It localises to the cytoplasm. The enzyme catalyses RNA(n+1) + phosphate = RNA(n) + a ribonucleoside 5'-diphosphate. Its function is as follows. Involved in mRNA degradation. Catalyzes the phosphorolysis of single-stranded polyribonucleotides processively in the 3'- to 5'-direction. This chain is Polyribonucleotide nucleotidyltransferase, found in Shewanella sp. (strain ANA-3).